A 117-amino-acid polypeptide reads, in one-letter code: Ribonuclease P protein component (117 aa).

The protein belongs to the RnpA family. As to quaternary structure, consists of a catalytic RNA component (M1 or rnpB) and a protein subunit.

The catalysed reaction is Endonucleolytic cleavage of RNA, removing 5'-extranucleotides from tRNA precursor.. In terms of biological role, RNaseP catalyzes the removal of the 5'-leader sequence from pre-tRNA to produce the mature 5'-terminus. It can also cleave other RNA substrates such as 4.5S RNA. The protein component plays an auxiliary but essential role in vivo by binding to the 5'-leader sequence and broadening the substrate specificity of the ribozyme. The sequence is that of Ribonuclease P protein component from Thermotoga sp. (strain RQ2).